Here is a 29-residue protein sequence, read N- to C-terminus: Cytolysin Uc-1 (29 aa).

Over residues 1 to 15 (DEQTGSKGPNENLPS) the composition is skewed to polar residues. The interval 1–29 (DEQTGSKGPNENLPSQKDLXAKASXLTEV) is disordered.

The protein localises to the secreted. It is found in the nematocyst. It localises to the target cell membrane. In terms of biological role, pore-forming toxin that lyses bovine erythrocytes at nanomolar concentrations. Is devoid of enzymatic activity. Binds to monolayers and efficiently permeabilizes small lipid vesicles composed of sphingomyelin and cholesterol. The cytolytic activity is not prevented by cholesterol or sphingomyelin. The polypeptide is Cytolysin Uc-1 (Urticina crassicornis (Mottled anemone)).